Reading from the N-terminus, the 105-residue chain is Flexible cuticle protein 12 (105 aa).

A signal peptide spans 1–16 (MKSFVVVALLVAVAAA). The Chitin-binding type R&amp;R domain occupies 37 to 105 (VEGFQYGYET…KPVGAHIPVA (69 aa)).

This Hyalophora cecropia (Cecropia moth) protein is Flexible cuticle protein 12 (CP12).